Reading from the N-terminus, the 173-residue chain is Zinc finger matrin-type protein 5 (173 aa).

The C3H1-type zinc finger occupies 51–79; the sequence is ERSKEVCRKFVQTGQCVFGTSCRFSHMSE. Residues 83-111 form a disordered region; that stretch reads KMLEQKIDDEKRQKEDPDQDGSSERSVDE.

In terms of assembly, component of the U11/U12 snRNPs that are part of the U12-type spliceosome.

It localises to the nucleus. The polypeptide is Zinc finger matrin-type protein 5 (zmat5) (Danio rerio (Zebrafish)).